Here is a 143-residue protein sequence, read N- to C-terminus: Crossover junction endodeoxyribonuclease Hjc (143 aa).

Glu11 provides a ligand contact to Mg(2+). Ser31 is an active-site residue. Residues Asp41 and Glu54 each contribute to the Mg(2+) site.

Belongs to the Holliday junction resolvase Hjc family. Homodimer. The cofactor is Mg(2+).

The catalysed reaction is Endonucleolytic cleavage at a junction such as a reciprocal single-stranded crossover between two homologous DNA duplexes (Holliday junction).. A structure-specific endonuclease that resolves Holliday junction (HJ) intermediates during genetic recombination. Cleaves 4-way DNA junctions introducing paired nicks in opposing strands, leaving a 5'-terminal phosphate and a 3'-terminal hydroxyl group that are ligated to produce recombinant products. In terms of biological role, redundant function with Holliday junction resolvase Hje. In Sulfolobus acidocaldarius (strain ATCC 33909 / DSM 639 / JCM 8929 / NBRC 15157 / NCIMB 11770), this protein is Crossover junction endodeoxyribonuclease Hjc.